The chain runs to 379 residues: Intracellular hyaluronan-binding protein 4.S (379 aa).

Disordered regions lie at residues Thr52–Glu260 and Ser332–Ala379. The span at Gly71–Ala81 shows a compositional bias: basic and acidic residues. Residues Lys107–Ser116 are compositionally biased toward polar residues. 2 stretches are compositionally biased toward basic and acidic residues: residues Val118–Arg133 and Arg139–Met158. The span at Gly162–Gly174 shows a compositional bias: gly residues. Over residues Thr179–Gly208 the composition is skewed to basic and acidic residues. Composition is skewed to acidic residues over residues Glu232–Ala241 and Asn368–Ala379.

Belongs to the SERBP1-HABP4 family. As to quaternary structure, associates with ribosomes; promoting ribosome stabilization. Interacts with eef2/eEF2; promoting ribosome stabilization.

It localises to the nucleus. It is found in the cytoplasm. Its subcellular location is the stress granule. The protein resides in the nucleolus. The protein localises to the nucleus speckle. It localises to the cajal body. In terms of biological role, ribosome-binding protein that promotes ribosome hibernation, a process during which ribosomes are stabilized in an inactive state and preserved from proteasomal degradation. Acts via its association with eef2/eEF2 factor at the A-site of the ribosome, promoting ribosome stabilization in an inactive state compatible with storage. Plays a key role in ribosome hibernation in the mature egg by promoting ribosome stabilization. Ribosomes, which are produced in large quantities during oogenesis, are stored and translationally repressed in the egg and early embryo. In Xenopus laevis (African clawed frog), this protein is Intracellular hyaluronan-binding protein 4.S.